A 750-amino-acid chain; its full sequence is Photosystem I P700 chlorophyll a apoprotein A1 (750 aa).

8 helical membrane passes run 70-93, 156-179, 195-219, 291-309, 346-369, 385-411, 433-455, and 531-549; these read VFSAHFGQLSIIFLWLSGMYFHGA, LYCTAIGALIFAALMLFAGWFHYH, LNHHLAGLLGLGSLSWAGHQVHVSL, IAHHHLAIAILFLIAGHMY, WHAQLSLNLAMLGSLTIIVAHHMY, LSLFTHHMWIGGFLIVGAAAHAAIFMV, AIISHLNWVCIFLGFHSFGLYIH, and FLVHHIHAFTIHVTVLILL. 2 residues coordinate [4Fe-4S] cluster: Cys-573 and Cys-582. Transmembrane regions (helical) follow at residues 589–610 and 664–686; these read HVFLGLFWMYNAISVVIFHFSW and LSAYGLFFLGAHFVWAFSLMFLF. Residue His-675 coordinates chlorophyll a'. Positions 683 and 691 each coordinate chlorophyll a. Trp-692 lines the phylloquinone pocket. Residues 724 to 744 form a helical membrane-spanning segment; that stretch reads AVGVTHYLLGGIATTWAFFLA.

The protein belongs to the PsaA/PsaB family. The PsaA/B heterodimer binds the P700 chlorophyll special pair and subsequent electron acceptors. PSI consists of a core antenna complex that captures photons, and an electron transfer chain that converts photonic excitation into a charge separation. The eukaryotic PSI reaction center is composed of at least 11 subunits. P700 is a chlorophyll a/chlorophyll a' dimer, A0 is one or more chlorophyll a, A1 is one or both phylloquinones and FX is a shared 4Fe-4S iron-sulfur center. is required as a cofactor.

It localises to the plastid. Its subcellular location is the chloroplast thylakoid membrane. It catalyses the reaction reduced [plastocyanin] + hnu + oxidized [2Fe-2S]-[ferredoxin] = oxidized [plastocyanin] + reduced [2Fe-2S]-[ferredoxin]. Its function is as follows. PsaA and PsaB bind P700, the primary electron donor of photosystem I (PSI), as well as the electron acceptors A0, A1 and FX. PSI is a plastocyanin-ferredoxin oxidoreductase, converting photonic excitation into a charge separation, which transfers an electron from the donor P700 chlorophyll pair to the spectroscopically characterized acceptors A0, A1, FX, FA and FB in turn. Oxidized P700 is reduced on the lumenal side of the thylakoid membrane by plastocyanin. The polypeptide is Photosystem I P700 chlorophyll a apoprotein A1 (Citrus sinensis (Sweet orange)).